A 218-amino-acid chain; its full sequence is Large ribosomal subunit protein bL25 (218 aa).

Belongs to the bacterial ribosomal protein bL25 family. CTC subfamily. As to quaternary structure, part of the 50S ribosomal subunit; part of the 5S rRNA/L5/L18/L25 subcomplex. Contacts the 5S rRNA. Binds to the 5S rRNA independently of L5 and L18.

In terms of biological role, this is one of the proteins that binds to the 5S RNA in the ribosome where it forms part of the central protuberance. The chain is Large ribosomal subunit protein bL25 from Polaromonas naphthalenivorans (strain CJ2).